The primary structure comprises 208 residues: MAKYTEAKCRMCRREGCKLFLKGDRCFTDKCAYDRRPYAPGQHGRARKKVSEYAVQLREKQKTRRIYGILERQFHGYFVKADMQKGVTGTNLLVILERRLDNVVYRLGFANSRNQARQLVRHGVFTLNGRKVNIPSLQVRLGDTIEVPEKNRKIPVLAEAQEVIARRGCPAWLEADGAAFKGTVKAMPQRDDIQFPVNEQLIVELYSK.

The S4 RNA-binding domain maps to 98 to 161 (RRLDNVVYRL…RKIPVLAEAQ (64 aa)).

The protein belongs to the universal ribosomal protein uS4 family. As to quaternary structure, part of the 30S ribosomal subunit. Contacts protein S5. The interaction surface between S4 and S5 is involved in control of translational fidelity.

Its function is as follows. One of the primary rRNA binding proteins, it binds directly to 16S rRNA where it nucleates assembly of the body of the 30S subunit. With S5 and S12 plays an important role in translational accuracy. The polypeptide is Small ribosomal subunit protein uS4 (Desulfovibrio desulfuricans (strain ATCC 27774 / DSM 6949 / MB)).